The chain runs to 870 residues: Dynamin-2 (870 aa).

Positions 28–294 (HLDLPQIAVV…LTNHIRESLP (267 aa)) constitute a Dynamin-type G domain. The tract at residues 38 to 45 (GGQSAGKS) is G1 motif. GDP is bound by residues serine 41, glycine 43, lysine 44, serine 45, serine 46, arginine 59, and glycine 60. A G2 motif region spans residues 64–66 (VTR). Residues 136 to 139 (DLPG) form a G3 motif region. Residues 205 to 208 (TKLD) are G4 motif. Residues lysine 206, aspartate 208, and aspartate 211 each coordinate GDP. At tyrosine 231 the chain carries Phosphotyrosine. The interval 235 to 238 (VNRS) is G5 motif. GDP contacts are provided by asparagine 236, arginine 237, and glutamine 239. Lysine 299 carries the N6-acetyllysine modification. The region spanning 519 to 625 (LVIRRGWLTI…WKASFLRAGV (107 aa)) is the PH domain. Tyrosine 597 carries the phosphotyrosine modification. Residue lysine 598 is modified to N6-acetyllysine. Residues 653 to 744 (VETIRNLVDS…IIGDISTSTV (92 aa)) form the GED domain. Residues 741–870 (TSTVSTPVPP…IRPAEPSLLD (130 aa)) form a disordered region. Threonine 755 carries the post-translational modification Phosphothreonine. The segment covering 756–767 (WLQNTSSHSPTP) has biased composition (polar residues). Serine 764 carries the phosphoserine; by CDK1 modification. Pro residues predominate over residues 826–846 (SAPPQIPSRPARIPPGIPPGV). Over residues 847-864 (PSRRAPAAPSRPTIIRPA) the composition is skewed to low complexity.

It belongs to the TRAFAC class dynamin-like GTPase superfamily. Dynamin/Fzo/YdjA family. Oligomerizes into a helical polymer that self-assembles around the vesicle membrane, when associated to the menbrane through lipid binding. Interacts with SHANK1 and SHANK2. Interacts with SNX9. Interacts (via C-terminal proline-rich domain (PRD)) with SNX18 (via SH3 domain); this interaction regulates ATG9A and ATG16L1 trafficking from recycling endosomes to sites of autophagosome formation. Interacts with SNX33 (via SH3 domain). Interacts with PSTPIP1 (via SH3 domain). Interacts with CTNND2. Interacts (via C-terminal proline-rich domain (PRD)) with BIN1 (via SH3 domain); this interaction allows the recruitment of DNM2 to the membrane tubules and inhibits self-assembly-stimulated GTPase activity on the membrane. Interacts with GABARAP, GABARAPL1 and GABARAPL2. Interacts with MAP1LC3B (the lipidate and non-lipidated LC3 form); this interaction mediates recycling endosome scission leading to autophagosome release. Interacts with ITSN1. Interacts with MYOF. May interact with PIK3C3. May be a component of a complex composed of RAB5A (in GDP-bound form), DYN2 and PIK3C3. Interacts with SDC4; this interaction is markedly enhanced at focal ahesion site upon induction of focal adhesions and stress-fiber formation. Interacts with ACTN1. Interacts with CTTN; this interaction stimulates the intrinsic GTPase activity of DNM2 and stabilizes the association of DNM2 and actin filaments; in addition this interaction is stimulated by ligand binding to the receptor, leading to the recruitment of the DNM2-CTTN complex to the sequestered receptor-ligand complex to its internalization. Interacts with NOSTRIN (via SH3 domain); this interaction allows the recruitment of NOS3 to dynamin-positive structures. Interacts (via C-terminal proline-rich domain (PRD)) with SH3BP4 (via SH3 domain); this interaction controls the GTPase activity and is prevented by EGFR-induced tyrosine phosphorylation of either DNM2 or SH3BP4. Interacts with MYO1E (via SH3 domain). Interacts with TUBG1; this interaction may participate in centrosome cohesion. Phosphorylation at Ser-848 by GSK3-alpha relieves the inhibition of BIN1 and promotes endocytosis. Phosphorylation at Ser-764 by CDK1 is greatly increased upon mitotic entry. It regulates cytokinesis downstream of calcineurin, and does not affect clathrin-mediated endocytosis. Dephosphorylated by calcineurin/PP2 during cytokinesis in a Ca(2+)- and calmodulin-dependent manner. Phosphorylated on tyrosine residues by EGFR. Phosphorylated on tyrosine residues after activation of SRC. As to expression, ubiquitously expressed. Brain expression is restricted to glial cells and fibroblasts. Highest levels in the testis.

The protein localises to the cytoplasm. It localises to the cytoskeleton. Its subcellular location is the cytoplasmic vesicle. It is found in the clathrin-coated vesicle. The protein resides in the cell projection. The protein localises to the uropodium. It localises to the endosome. Its subcellular location is the microtubule organizing center. It is found in the centrosome. The protein resides in the centriole. The protein localises to the recycling endosome. It localises to the phagocytic cup. Its subcellular location is the phagosome membrane. It is found in the podosome. The protein resides in the cell junction. The protein localises to the postsynaptic density. It localises to the synapse. Its subcellular location is the synaptosome. It is found in the midbody. The protein resides in the membrane. The protein localises to the clathrin-coated pit. It localises to the cell membrane. The enzyme catalyses GTP + H2O = GDP + phosphate + H(+). In terms of biological role, catalyzes the hydrolysis of GTP and utilizes this energy to mediate vesicle scission at plasma membrane during endocytosis and filament remodeling at many actin structures during organization of the actin cytoskeleton. Plays an important role in vesicular trafficking processes, namely clathrin-mediated endocytosis (CME), exocytic and clathrin-coated vesicle from the trans-Golgi network, and PDGF stimulated macropinocytosis. During vesicular trafficking process, associates to the membrane, through lipid binding, and self-assembles into ring-like structure through oligomerization to form a helical polymer around the vesicle membrane and leading to vesicle scission. Plays a role in organization of the actin cytoskeleton by mediating arrangement of stress fibers and actin bundles in podocytes. During organization of the actin cytoskeleton, self-assembles into ring-like structure that directly bundles actin filaments to form typical membrane tubules decorated with dynamin spiral polymers. Self-assembly increases GTPase activity and the GTP hydrolysis causes the rapid depolymerization of dynamin spiral polymers, and results in dispersion of actin bundles. Remodels, through its interaction with CTTN, bundled actin filaments in a GTPase-dependent manner and plays a role in orchestrating the global actomyosin cytoskeleton. The interaction with CTTN stabilizes the interaction of DNM2 and actin filaments and stimulates the intrinsic GTPase activity that results in actin filament-barbed ends and increases the sensitivity of filaments in bundles to the actin depolymerizing factor, CFL1. Plays a role in the autophagy process, by participating in the formation of ATG9A vesicles destined for the autophagosomes through its interaction with SNX18, by mediating recycling endosome scission leading to autophagosome release through MAP1LC3B interaction and by regulating maturation of apoptotic cell corpse-containing phagosomes by recruiting PIK3C3 to the phagosome membrane. Also plays a role in cytokinesis. May participate in centrosome cohesion through its interaction with TUBG1. Plays a role in the regulation of neuron morphology, axon growth and formation of neuronal growth cones. Involved in membrane tubulation. This chain is Dynamin-2, found in Rattus norvegicus (Rat).